The following is a 291-amino-acid chain: N-acetylmannosamine kinase (291 aa).

ATP-binding positions include 5 to 12 and 132 to 139; these read AIDIGGTK and GVGGGVVC. Positions 156, 166, 168, and 173 each coordinate Zn(2+).

This sequence belongs to the ROK (NagC/XylR) family. NanK subfamily. In terms of assembly, homodimer.

It catalyses the reaction an N-acyl-D-mannosamine + ATP = an N-acyl-D-mannosamine 6-phosphate + ADP + H(+). Its pathway is amino-sugar metabolism; N-acetylneuraminate degradation; D-fructose 6-phosphate from N-acetylneuraminate: step 2/5. In terms of biological role, catalyzes the phosphorylation of N-acetylmannosamine (ManNAc) to ManNAc-6-P. This Salmonella paratyphi B (strain ATCC BAA-1250 / SPB7) protein is N-acetylmannosamine kinase.